A 59-amino-acid polypeptide reads, in one-letter code: DNA gyrase inhibitor YacG (59 aa).

Residues cysteine 9, cysteine 12, cysteine 27, and cysteine 31 each coordinate Zn(2+).

This sequence belongs to the DNA gyrase inhibitor YacG family. Interacts with GyrB. Zn(2+) serves as cofactor.

Functionally, inhibits all the catalytic activities of DNA gyrase by preventing its interaction with DNA. Acts by binding directly to the C-terminal domain of GyrB, which probably disrupts DNA binding by the gyrase. In Geotalea daltonii (strain DSM 22248 / JCM 15807 / FRC-32) (Geobacter daltonii), this protein is DNA gyrase inhibitor YacG.